The sequence spans 48 residues: DNA-directed RNA polymerase subunit Rpo12 (48 aa).

Cysteine 9, cysteine 26, and cysteine 29 together coordinate Zn(2+).

It belongs to the archaeal Rpo12/eukaryotic RPC10 RNA polymerase subunit family. In terms of assembly, part of the RNA polymerase complex. The cofactor is Zn(2+).

The protein localises to the cytoplasm. It carries out the reaction RNA(n) + a ribonucleoside 5'-triphosphate = RNA(n+1) + diphosphate. In terms of biological role, DNA-dependent RNA polymerase (RNAP) catalyzes the transcription of DNA into RNA using the four ribonucleoside triphosphates as substrates. In Saccharolobus islandicus (strain Y.N.15.51 / Yellowstone #2) (Sulfolobus islandicus), this protein is DNA-directed RNA polymerase subunit Rpo12.